We begin with the raw amino-acid sequence, 209 residues long: Ion-translocating oxidoreductase complex subunit G (209 aa).

Residues 9-29 (ATTLALFAASTTAVTAVVNML) form a helical membrane-spanning segment. The residue at position 175 (T175) is an FMN phosphoryl threonine.

This sequence belongs to the RnfG family. The complex is composed of six subunits: RnfA, RnfB, RnfC, RnfD, RnfE and RnfG. It depends on FMN as a cofactor.

The protein localises to the cell inner membrane. In terms of biological role, part of a membrane-bound complex that couples electron transfer with translocation of ions across the membrane. The polypeptide is Ion-translocating oxidoreductase complex subunit G (Pectobacterium atrosepticum (strain SCRI 1043 / ATCC BAA-672) (Erwinia carotovora subsp. atroseptica)).